The primary structure comprises 338 residues: m7GpppX diphosphatase (338 aa).

Residues 1–36 (MADTAPQLKRKREQEAEEAETPSTEEKEAGVGNGTS) form a disordered region. Ala2 carries the N-acetylalanine modification. Residues 9-12 (KRKR) carry the nuclear localization signal (NLS) motif. Residues Ser23 and Ser100 each carry the phosphoserine modification. Lys137 and Lys141 each carry N6-acetyllysine. A nuclear export sequence (NES) motif is present at residues 141–153 (KYMRQDLRLIRET). Residues Trp174, Glu184, Asp204, Lys206, and 267 to 278 (HYLPSYYHLHVH) each bind substrate. A Histidine triad motif motif is present at residues 274–278 (HLHVH). The Nucleophile role is filled by His276.

Belongs to the HIT family. Homodimer. Associates with components of the exosome multienzyme ribonuclease complex, such as EXOSC3 and EXOSC4. Interacts with NDOR1.

Its subcellular location is the cytoplasm. The protein localises to the nucleus. The enzyme catalyses a 5'-end (N(7)-methyl 5'-triphosphoguanosine)-ribonucleoside in mRNA + H2O = N(7)-methyl-GMP + a 5'-end diphospho-ribonucleoside in mRNA + 2 H(+). The hydrolytic product 7-methylguanosine diphosphate (m7GDP) efficiently inhibits the decapping scavenger activity and acts as a competitive inhibitor in vitro. Inhibited by 2,4-diaminoquinazoline. Functionally, decapping scavenger enzyme that catalyzes the cleavage of a residual cap structure following the degradation of mRNAs by the 3'-&gt;5' exosome-mediated mRNA decay pathway. Hydrolyzes cap analog structures like 7-methylguanosine nucleoside triphosphate (m7GpppG) with up to 10 nucleotide substrates (small capped oligoribonucleotides) and specifically releases 5'-phosphorylated RNA fragments and 7-methylguanosine monophosphate (m7GMP). Cleaves cap analog structures like tri-methyl guanosine nucleoside triphosphate (m3(2,2,7)GpppG) with very poor efficiency. Does not hydrolyze unmethylated cap analog (GpppG) and shows no decapping activity on intact m7GpppG-capped mRNA molecules longer than 25 nucleotides. Does not hydrolyze 7-methylguanosine diphosphate (m7GDP) to m7GMP. May also play a role in the 5'-&gt;3 mRNA decay pathway; m7GDP, the downstream product released by the 5'-&gt;3' mRNA mediated decapping activity, may be also converted by DCPS to m7GMP. Binds to m7GpppG and strongly to m7GDP. Plays a role in first intron splicing of pre-mRNAs. Inhibits activation-induced cell death. The polypeptide is m7GpppX diphosphatase (Dcps) (Mus musculus (Mouse)).